A 280-amino-acid chain; its full sequence is Fructose-1,6-bisphosphatase class 1 (280 aa).

Mg(2+) contacts are provided by Glu-64, Asp-83, Leu-85, and Asp-86. Substrate is bound by residues 86–89, Tyr-189, and Lys-220; that span reads DGSS. Residue Glu-226 participates in Mg(2+) binding.

The protein belongs to the FBPase class 1 family. As to quaternary structure, homotetramer. It depends on Mg(2+) as a cofactor.

It is found in the cytoplasm. It catalyses the reaction beta-D-fructose 1,6-bisphosphate + H2O = beta-D-fructose 6-phosphate + phosphate. Its pathway is carbohydrate biosynthesis; gluconeogenesis. The polypeptide is Fructose-1,6-bisphosphatase class 1 (Campylobacter jejuni subsp. jejuni serotype O:2 (strain ATCC 700819 / NCTC 11168)).